Reading from the N-terminus, the 92-residue chain is MARSLKKAPFVANHLLEKVERLNTQGDKKVIKTWSRSSTIVPLMIGHTIAVHNGREHIPVFITDQMVGHKLGEFAPTRTFRGHVKKDKKSKR.

Belongs to the universal ribosomal protein uS19 family.

Its subcellular location is the plastid. It localises to the chloroplast. Its function is as follows. Protein S19 forms a complex with S13 that binds strongly to the 16S ribosomal RNA. The sequence is that of Small ribosomal subunit protein uS19c (rps19) from Chlorella vulgaris (Green alga).